The primary structure comprises 195 residues: Pyridoxal 5'-phosphate synthase subunit PdxT (195 aa).

53–55 serves as a coordination point for L-glutamine; it reads GES. Catalysis depends on C82, which acts as the Nucleophile. Residues R108 and 134-135 each bind L-glutamine; that span reads IR. Catalysis depends on charge relay system residues H173 and E175.

Belongs to the glutaminase PdxT/SNO family. In the presence of PdxS, forms a dodecamer of heterodimers. Only shows activity in the heterodimer.

The enzyme catalyses aldehydo-D-ribose 5-phosphate + D-glyceraldehyde 3-phosphate + L-glutamine = pyridoxal 5'-phosphate + L-glutamate + phosphate + 3 H2O + H(+). The catalysed reaction is L-glutamine + H2O = L-glutamate + NH4(+). It functions in the pathway cofactor biosynthesis; pyridoxal 5'-phosphate biosynthesis. In terms of biological role, catalyzes the hydrolysis of glutamine to glutamate and ammonia as part of the biosynthesis of pyridoxal 5'-phosphate. The resulting ammonia molecule is channeled to the active site of PdxS. This Methanobrevibacter smithii (strain ATCC 35061 / DSM 861 / OCM 144 / PS) protein is Pyridoxal 5'-phosphate synthase subunit PdxT.